A 182-amino-acid polypeptide reads, in one-letter code: ADP-ribosylation factor 3 (182 aa).

Gly2 carries N-myristoyl glycine lipidation. GTP is bound by residues 24–31 (GLDNAGKT), 67–71 (DLGGQ), and 126–129 (NKQD).

The protein belongs to the small GTPase superfamily. Arf family. As to quaternary structure, interacts with GRIP; but preferentially when bound to GTP.

Its subcellular location is the golgi apparatus. In terms of biological role, GTP-binding protein involved in protein trafficking; may modulate vesicle budding and uncoating within the Golgi apparatus. In Arabidopsis thaliana (Mouse-ear cress), this protein is ADP-ribosylation factor 3 (ARF3).